Consider the following 148-residue polypeptide: Macrodomain Ter protein (148 aa).

This sequence belongs to the MatP family. As to quaternary structure, homodimer.

The protein localises to the cytoplasm. Required for spatial organization of the terminus region of the chromosome (Ter macrodomain) during the cell cycle. Prevents early segregation of duplicated Ter macrodomains during cell division. Binds specifically to matS, which is a 13 bp signature motif repeated within the Ter macrodomain. This chain is Macrodomain Ter protein, found in Haemophilus influenzae (strain PittGG).